Consider the following 304-residue polypeptide: Non-specific ribonucleoside hydrolase RihC (304 aa).

H233 is an active-site residue.

This sequence belongs to the IUNH family. RihC subfamily.

Hydrolyzes both purine and pyrimidine ribonucleosides with a broad-substrate specificity. The sequence is that of Non-specific ribonucleoside hydrolase RihC from Escherichia coli O7:K1 (strain IAI39 / ExPEC).